A 473-amino-acid polypeptide reads, in one-letter code: Trigger factor (473 aa).

The PPIase FKBP-type domain maps to 174–261 (GDIAVVSFKG…LKDLKEKELP (88 aa)). The disordered stretch occupies residues 437 to 473 (EISEKVTKSTTKSKTKSKTKKESQAKSEPNKKKKEKK). The segment covering 456-466 (KKESQAKSEPN) has biased composition (basic and acidic residues).

It belongs to the FKBP-type PPIase family. Tig subfamily.

It is found in the cytoplasm. It catalyses the reaction [protein]-peptidylproline (omega=180) = [protein]-peptidylproline (omega=0). Functionally, involved in protein export. Acts as a chaperone by maintaining the newly synthesized protein in an open conformation. Functions as a peptidyl-prolyl cis-trans isomerase. This chain is Trigger factor, found in Prochlorococcus marinus (strain MIT 9515).